Here is a 753-residue protein sequence, read N- to C-terminus: 5-methyltetrahydropteroyltriglutamate--homocysteine methyltransferase (753 aa).

5-methyltetrahydropteroyltri-L-glutamate is bound by residues 17–20 and Lys-117; that span reads RELK. Residues 431–433 and Glu-484 contribute to the L-homocysteine site; that span reads IGS. Residues 431 to 433 and Glu-484 each bind L-methionine; that span reads IGS. 5-methyltetrahydropteroyltri-L-glutamate is bound by residues 515-516 and Trp-561; that span reads RC. Position 599 (Asp-599) interacts with L-homocysteine. Asp-599 is a binding site for L-methionine. Glu-605 is a 5-methyltetrahydropteroyltri-L-glutamate binding site. Zn(2+)-binding residues include His-641, Cys-643, and Glu-665. The Proton donor role is filled by His-694. Cys-726 contributes to the Zn(2+) binding site.

It belongs to the vitamin-B12 independent methionine synthase family. Zn(2+) serves as cofactor.

The enzyme catalyses 5-methyltetrahydropteroyltri-L-glutamate + L-homocysteine = tetrahydropteroyltri-L-glutamate + L-methionine. It participates in amino-acid biosynthesis; L-methionine biosynthesis via de novo pathway; L-methionine from L-homocysteine (MetE route): step 1/1. Functionally, catalyzes the transfer of a methyl group from 5-methyltetrahydrofolate to homocysteine resulting in methionine formation. The polypeptide is 5-methyltetrahydropteroyltriglutamate--homocysteine methyltransferase (Shigella flexneri serotype 5b (strain 8401)).